The primary structure comprises 501 residues: Beta-glucosidase 25 (501 aa).

An N-terminal signal peptide occupies residues 1-19 (MSLLTLVHILVSFSACVEA). A beta-D-glucoside is bound at residue glutamine 39. An N-linked (GlcNAc...) asparagine glycan is attached at asparagine 107. Residues histidine 140 and 185 to 186 (NE) contribute to the a beta-D-glucoside site. Glutamate 186 functions as the Proton donor in the catalytic mechanism. Cysteine 205 and cysteine 213 are oxidised to a cystine. Residues tyrosine 329, glutamate 402, tryptophan 452, 459–460 (EW), and phenylalanine 468 each bind a beta-D-glucoside. The active-site Nucleophile is the glutamate 402. N-linked (GlcNAc...) asparagine glycosylation is present at asparagine 478.

Belongs to the glycosyl hydrolase 1 family.

The catalysed reaction is Hydrolysis of terminal, non-reducing beta-D-glucosyl residues with release of beta-D-glucose.. The polypeptide is Beta-glucosidase 25 (BGLU25) (Oryza sativa subsp. japonica (Rice)).